The sequence spans 251 residues: Hydroxyacylglutathione hydrolase (251 aa).

Residues His53, His55, Asp57, His58, His110, Asp127, and His165 each coordinate Zn(2+).

This sequence belongs to the metallo-beta-lactamase superfamily. Glyoxalase II family. In terms of assembly, monomer. It depends on Zn(2+) as a cofactor.

It carries out the reaction an S-(2-hydroxyacyl)glutathione + H2O = a 2-hydroxy carboxylate + glutathione + H(+). The protein operates within secondary metabolite metabolism; methylglyoxal degradation; (R)-lactate from methylglyoxal: step 2/2. Its function is as follows. Thiolesterase that catalyzes the hydrolysis of S-D-lactoyl-glutathione to form glutathione and D-lactic acid. The sequence is that of Hydroxyacylglutathione hydrolase from Escherichia fergusonii (strain ATCC 35469 / DSM 13698 / CCUG 18766 / IAM 14443 / JCM 21226 / LMG 7866 / NBRC 102419 / NCTC 12128 / CDC 0568-73).